The following is a 699-amino-acid chain: Elongation factor G (699 aa).

In terms of domain architecture, tr-type G spans Glu8–Ile283. GTP is bound by residues Ala17 to Thr24, Asp81 to His85, and Asn135 to Asp138.

This sequence belongs to the TRAFAC class translation factor GTPase superfamily. Classic translation factor GTPase family. EF-G/EF-2 subfamily.

The protein resides in the cytoplasm. Its function is as follows. Catalyzes the GTP-dependent ribosomal translocation step during translation elongation. During this step, the ribosome changes from the pre-translocational (PRE) to the post-translocational (POST) state as the newly formed A-site-bound peptidyl-tRNA and P-site-bound deacylated tRNA move to the P and E sites, respectively. Catalyzes the coordinated movement of the two tRNA molecules, the mRNA and conformational changes in the ribosome. This is Elongation factor G from Rickettsia parkeri.